A 264-amino-acid chain; its full sequence is ATP synthase subunit a (264 aa).

6 helical membrane-spanning segments follow: residues 29–49, 89–109, 134–154, 177–197, 208–228, and 235–255; these read TWHI…LWLF, VIAP…FMDM, DLNI…YYSI, IPVN…SLAL, LIFI…TLGV, and LIFH…LTIV.

The protein belongs to the ATPase A chain family. In terms of assembly, F-type ATPases have 2 components, CF(1) - the catalytic core - and CF(0) - the membrane proton channel. CF(1) has five subunits: alpha(3), beta(3), gamma(1), delta(1), epsilon(1). CF(0) has three main subunits: a(1), b(2) and c(9-12). The alpha and beta chains form an alternating ring which encloses part of the gamma chain. CF(1) is attached to CF(0) by a central stalk formed by the gamma and epsilon chains, while a peripheral stalk is formed by the delta and b chains.

It localises to the cell inner membrane. Key component of the proton channel; it plays a direct role in the translocation of protons across the membrane. In Shewanella woodyi (strain ATCC 51908 / MS32), this protein is ATP synthase subunit a.